A 62-amino-acid chain; its full sequence is Conotoxin reg3.7 (62 aa).

The N-terminal stretch at 1-15 (RVLLTICLLLFPLSA) is a signal peptide. A propeptide spanning residues 16 to 45 (LPLDGDQPADQPARHMQSAERNPRFDPVKR) is cleaved from the precursor. The interval 17-37 (PLDGDQPADQPARHMQSAERN) is disordered. 3 cysteine pairs are disulfide-bonded: Cys46–Cys60, Cys47–Cys58, and Cys52–Cys61. Cys61 carries the cysteine amide modification.

The protein belongs to the conotoxin M superfamily. In terms of tissue distribution, expressed by the venom duct.

The protein resides in the secreted. The protein is Conotoxin reg3.7 of Conus regius (Crown cone).